We begin with the raw amino-acid sequence, 424 residues long: Serine--tRNA ligase (424 aa).

Residue 233–235 (TAE) coordinates L-serine. 264–266 (RRE) contributes to the ATP binding site. Residue E287 coordinates L-serine. 351–354 (EISS) contacts ATP. S386 provides a ligand contact to L-serine.

This sequence belongs to the class-II aminoacyl-tRNA synthetase family. Type-1 seryl-tRNA synthetase subfamily. Homodimer. The tRNA molecule binds across the dimer.

The protein localises to the cytoplasm. The enzyme catalyses tRNA(Ser) + L-serine + ATP = L-seryl-tRNA(Ser) + AMP + diphosphate + H(+). It catalyses the reaction tRNA(Sec) + L-serine + ATP = L-seryl-tRNA(Sec) + AMP + diphosphate + H(+). It participates in aminoacyl-tRNA biosynthesis; selenocysteinyl-tRNA(Sec) biosynthesis; L-seryl-tRNA(Sec) from L-serine and tRNA(Sec): step 1/1. Catalyzes the attachment of serine to tRNA(Ser). Is also able to aminoacylate tRNA(Sec) with serine, to form the misacylated tRNA L-seryl-tRNA(Sec), which will be further converted into selenocysteinyl-tRNA(Sec). In Petrotoga mobilis (strain DSM 10674 / SJ95), this protein is Serine--tRNA ligase.